The following is a 1180-amino-acid chain: MSTKDAHDPFATPLETITHDPLAETAGLKADYDKRAYGEANPALMGTLEKDDMANRPIDAVEEVPTTSIRKWWVRLTWFTTWWIPSFVLSKCGGMKRPDVQMAWREKFTICAIIFWLCAIILFYIIAFGRLLCPDYDKAWNLSQLSQHAGENDYYAAVRGTVYDFSKFYKGDHSDITNLQTSSDLMLQLAGQDLTGYFPVPLSVGCQSLVSDTSLALMPTANNTPLISQAIHTSGPLQGDTSSKLHDINWYPDRFLPFVKKLRKGYYVYSKKDLANQGQWRNWAVIHGKVYDLSNYLNTVSTYQTNPAYSFLDSSIVSLFKSQAGSDITADFEDAMSTFNQTYRGATQACLDNVFYVGRTDFRDTARCEVQNYLLLAFSVLLVTTVLAKFIAALQLGTKRSPEQQDKFVICQVPCYTEGEEELRKTIDSLAGLEYDDKRKLLFLICDGMIVGSGNDRSTPRIVLDILGVDPKIDPEPLMFKSVAEGSKQLNYAKVYSGLYEFEGHVVPYIVVVKVGRPSERSRPGNRGKRDSQILLMRYLNRVHFDAPMFPLELEIYHQMKNVIGIDPAFYEYILMVDADTRVEADGLNRLVANCADDSSIIAICGETTLDNAEGSWWTMIQVYEYYISHHLSKAFESLFGSVTCLPGCFSLYRIRSSDKGRPLFISNRIIDDYSENRVDTLHKKNLLHLGEDRYLTTLVLKNFPSFRTKFVPDAKALTSAPDRFGVLLSQRRRWINSTVHNLAELVLMPELCGFCLFSMRFIVFIDLLGTVILPATAVYLVYLIVTVATKSAPIPYISIAMIAAVYGLQAILFLLKRQWQYIGWLVIYILAYPVFSFFLPIYSFWHMDDFSWGNTRIVVGEKGNKKIVAGTDDEPYDDTMIPLKRFSEYQREVWEEEAAAPSMRSGMTGASGPFGNSQAILHSGPPSVYRAGGSAYAGSVAGSDYGAGLGDYYQNTNVLQKPAHSRQTSAAALSQMGGSQAASMMFGTGTPSVYGMAGMGSMYGMPGSSASMYGLPNPMMNTTASMYGLPPMLANPLGANHSPAHSDIGVSMPVSQQNTGGSHIWAQPPEAATVAANSGRGSGMQARPVSTLSALNATNPFGVTAVARALAVNEASDPTDEEIKSAVQTYLANQPSLMNVTKRSVREALVAAFPNAELSYKKSMINKAIDDTLSGGAQA.

The next 2 helical transmembrane spans lie at 108-128 (FTIC…IIAF) and 374-394 (LLLA…IAAL). N737 is a glycosylation site (N-linked (GlcNAc...) asparagine). 3 consecutive transmembrane segments (helical) span residues 762–782 (FIVF…VYLV), 795–815 (IPYI…ILFL), and 822–842 (YIGW…FLPI). The 58-residue stretch at 1118–1175 (DPTDEEIKSAVQTYLANQPSLMNVTKRSVREALVAAFPNAELSYKKSMINKAIDDTLS) folds into the DEK-C domain.

This sequence belongs to the chitin synthase family. Class V subfamily.

The protein localises to the cell membrane. Its subcellular location is the cytoplasmic vesicle membrane. The enzyme catalyses [(1-&gt;4)-N-acetyl-beta-D-glucosaminyl](n) + UDP-N-acetyl-alpha-D-glucosamine = [(1-&gt;4)-N-acetyl-beta-D-glucosaminyl](n+1) + UDP + H(+). Its function is as follows. Polymerizes chitin, a structural polymer of the cell wall and septum, by transferring the sugar moiety of UDP-GlcNAc to the non-reducing end of the growing chitin polymer. Plays a crucial role during infection and allows the fungus to overcome the resistance of the plant that checks growth of the pathogen and eventually eliminates it. The chain is Chitin synthase 6 from Mycosarcoma maydis (Corn smut fungus).